The chain runs to 312 residues: MTHAKLVIIGSGPAGYTAAIYASRALLTPVLFEGFFSGIAGGQLMTTTEVENFPGFPEGVLGHQLMDLMKTQAQRFGTQVLSKDITAVDFSVRPFVLKSGKETFTCDACIIATGASAKRLSIPGAGDNEFWQKGVTACAVCDGASPIFRDKDLFVVGGGDSALEEAMFLTRYGKRVFVVHRRDTLRASKVMVNKAQANEKIFFLWNSEIVKISGDTLVRSIDIYNNVDETTTTMEAAGVFFAIGHQPNTAFLGGQVALDENGYIITEKGSSRTSVPGVFAAGDVQDKYYRQAITSAGSGCMAALDAERFLEN.

FAD is bound at residue Glu-33–Gln-43. Cys-138 and Cys-141 are joined by a disulfide. Residue Asp-283–Ala-292 coordinates FAD.

This sequence belongs to the class-II pyridine nucleotide-disulfide oxidoreductase family. In terms of assembly, homodimer. The cofactor is FAD.

The protein resides in the cytoplasm. The catalysed reaction is [thioredoxin]-dithiol + NADP(+) = [thioredoxin]-disulfide + NADPH + H(+). The polypeptide is Thioredoxin reductase (trxB) (Chlamydia trachomatis serovar D (strain ATCC VR-885 / DSM 19411 / UW-3/Cx)).